We begin with the raw amino-acid sequence, 129 residues long: Glycine cleavage system H protein (129 aa).

The 83-residue stretch at 24 to 106 (LIRVGISAFA…HGAGWLLVVR (83 aa)) folds into the Lipoyl-binding domain. Lysine 65 carries the N6-lipoyllysine modification.

This sequence belongs to the GcvH family. In terms of assembly, the glycine cleavage system is composed of four proteins: P, T, L and H. (R)-lipoate is required as a cofactor.

Functionally, the glycine cleavage system catalyzes the degradation of glycine. The H protein shuttles the methylamine group of glycine from the P protein to the T protein. This is Glycine cleavage system H protein from Synechococcus sp. (strain CC9902).